The chain runs to 103 residues: MSNKQKIRIRLKAFDHQVLDQSAEKIVETAKRTGAKVSGPVPLPTEKEIITILRAPHKYKDSREQFEMRTHKRLIDVVLPTPKTVDALMRLDLPAGVDIEIKL.

This sequence belongs to the universal ribosomal protein uS10 family. As to quaternary structure, part of the 30S ribosomal subunit.

Its function is as follows. Involved in the binding of tRNA to the ribosomes. This is Small ribosomal subunit protein uS10 from Ruminiclostridium cellulolyticum (strain ATCC 35319 / DSM 5812 / JCM 6584 / H10) (Clostridium cellulolyticum).